We begin with the raw amino-acid sequence, 66 residues long: Large ribosomal subunit protein bL35 (66 aa).

The disordered stretch occupies residues 22–41 (VMSAQRGKRHGMIKRTKKQI). The segment covering 27-41 (RGKRHGMIKRTKKQI) has biased composition (basic residues).

This sequence belongs to the bacterial ribosomal protein bL35 family.

The polypeptide is Large ribosomal subunit protein bL35 (Rhodopseudomonas palustris (strain TIE-1)).